Here is a 447-residue protein sequence, read N- to C-terminus: Tubulin beta-1 chain (447 aa).

GTP is bound by residues Q11, E69, S138, G142, T143, G144, N204, and N226. Position 69 (E69) interacts with Mg(2+). Residues 411 to 427 (AESNMNDLVSEYQQYQD) show a composition bias toward polar residues. Residues 411–447 (AESNMNDLVSEYQQYQDATADEEGDYEDEEEQVPEDE) form a disordered region. The span at 429–447 (TADEEGDYEDEEEQVPEDE) shows a compositional bias: acidic residues.

It belongs to the tubulin family. In terms of assembly, dimer of alpha and beta chains. A typical microtubule is a hollow water-filled tube with an outer diameter of 25 nm and an inner diameter of 15 nM. Alpha-beta heterodimers associate head-to-tail to form protofilaments running lengthwise along the microtubule wall with the beta-tubulin subunit facing the microtubule plus end conferring a structural polarity. Microtubules usually have 13 protofilaments but different protofilament numbers can be found in some organisms and specialized cells. The cofactor is Mg(2+). In terms of tissue distribution, expressed in leaf sheaths.

Its subcellular location is the cytoplasm. The protein localises to the cytoskeleton. In terms of biological role, tubulin is the major constituent of microtubules, a cylinder consisting of laterally associated linear protofilaments composed of alpha- and beta-tubulin heterodimers. Microtubules grow by the addition of GTP-tubulin dimers to the microtubule end, where a stabilizing cap forms. Below the cap, tubulin dimers are in GDP-bound state, owing to GTPase activity of alpha-tubulin. The protein is Tubulin beta-1 chain (TUBB1) of Oryza sativa subsp. japonica (Rice).